Reading from the N-terminus, the 204-residue chain is MSRNSAAGLENTLFQLKFTSKQLQKQANKASKEEKQETNKLKRALNENEDISRIYASNAIRKKNERLQLLKLASRVDSVASRVQTAVTMRQVSASMGQVCKGMDKALQNMNLQQITMIMDKFEQQFEDLDTSVNVYEDMGVNSDAMLVDNDKVDELMSKVADENGMELKQSAKLDNVPEIKAKEVNVDDEKEDKLAQRLRALRG.

The tract at residues methionine 1–methionine 103 is interaction with VSP24. Serine 5 carries the post-translational modification Phosphoserine. 2 coiled-coil regions span residues leucine 9–alanine 56 and asparagine 109–leucine 129. The interaction with VSP4 stretch occupies residues aspartate 104–glycine 204. Residues asparagine 176–glycine 204 form an interaction with VTA1 region. The span at valine 185–alanine 196 shows a compositional bias: basic and acidic residues. Positions valine 185–glycine 204 are disordered.

This sequence belongs to the SNF7 family. Self-associates. Interacts with VPS4 and VTA1. Interacts with IST1.

The protein resides in the endosome membrane. Its subcellular location is the endomembrane system. In terms of biological role, class E VPS protein implicated in concentration and sorting of cargo proteins of the multivesicular body (MVB) for incorporation into intralumenal vesicles. The lumenal sequestrated membrane proteins will be targeted into the vacuole after fusion of the endosome with the vacuole. Probably acts as a peripherally associated component of the ESCRT-III complex, which appears to be critical for late steps in MVB sorting, such as membrane invagination and final cargo sorting and recruits late-acting components of the sorting machinery. The MVB pathway requires the sequential function of ESCRT-O, -I,-II and -III complex assemblies. Regulates the membrane association of VPS4. Can stimulate VPS4 ATPase activity directly or via VTA1. The protein is Vacuolar protein-sorting-associated protein 46 (DID2) of Saccharomyces cerevisiae (strain ATCC 204508 / S288c) (Baker's yeast).